We begin with the raw amino-acid sequence, 124 residues long: Small ribosomal subunit protein uS12 (124 aa).

D90 is subject to 3-methylthioaspartic acid.

Belongs to the universal ribosomal protein uS12 family. In terms of assembly, part of the 30S ribosomal subunit. Contacts proteins S8 and S17. May interact with IF1 in the 30S initiation complex.

Its function is as follows. With S4 and S5 plays an important role in translational accuracy. In terms of biological role, interacts with and stabilizes bases of the 16S rRNA that are involved in tRNA selection in the A site and with the mRNA backbone. Located at the interface of the 30S and 50S subunits, it traverses the body of the 30S subunit contacting proteins on the other side and probably holding the rRNA structure together. The combined cluster of proteins S8, S12 and S17 appears to hold together the shoulder and platform of the 30S subunit. The polypeptide is Small ribosomal subunit protein uS12 (Wolbachia pipientis subsp. Culex pipiens (strain wPip)).